Consider the following 284-residue polypeptide: MDISNLPPHIRQQILGLISKPQQNNDESSSSNNKNNLINNEKVSNVLIDLTSNLKIENFKIFNKESLNQLEKKGYLIIDNFLNDLNKINLIYDESYNQFKENKLIEAGMNKGTDKWKDKSIRGDYIQWIHRDSNSRIQDKDLSSTIRNINYLLDKLDLIKNEFDNVIPNFNSIKTQTQLAVYLNGGRYIKHRDSFYSSESLTISRRITMIYYVNKDWKKGDGGELRLYTNNPNNTNQKELKQTEEFIDIEPIADRLLIFLSPFLEHEVLQCNFEPRIAITTWIY.

In terms of domain architecture, Fe2OG dioxygenase spans 169–284 (NFNSIKTQTQ…PRIAITTWIY (116 aa)). Residues His191, Asp193, and His266 each coordinate Fe cation. Arg276 lines the 2-oxoglutarate pocket.

The protein belongs to the P4HA family. Heterotetramer of two alpha-1 chains and two beta chains (the beta chain is the multi-functional PDI). Fe(2+) serves as cofactor. Requires L-ascorbate as cofactor.

It is found in the cytoplasm. It catalyses the reaction L-prolyl-[Skp1 protein] + 2-oxoglutarate + O2 = trans-4-hydroxy-L-prolyl-[Skp1 protein] + succinate + CO2. With respect to regulation, inhibited by the prolyl-hydroxylase inhibitors alpha,alpha'-dipyridyl and ethyl 3,4-dihydroxybenzoate. In terms of biological role, catalyzes the post-translational formation of 4-hydroxyproline. Probably hydroxylates skp1 on Pro-143. This is Prolyl 4-hydroxylase subunit alpha (phyA) from Dictyostelium discoideum (Social amoeba).